Consider the following 247-residue polypeptide: LHFPL tetraspan subfamily member 4 protein (247 aa).

A run of 4 helical transmembrane segments spans residues 22 to 42 (IGVL…VVFI), 97 to 117 (FFVL…ALFF), 127 to 147 (ICAW…MIFP), and 178 to 198 (ILAI…FVLG).

It belongs to the LHFP family. As to quaternary structure, interacts with GABA(A) receptor subunits. Interacts with GABRB3. Interacts with GABRA2. Interacts with GABRG2. Interacts with GABRA1. Identified in a complex of 720 kDa composed of LHFPL4, NLGN2, GABRA1, GABRB2, GABRG2 and GABRB3. Interacts with NLGN2; leading to mutual regulation of protein level and synaptic clustering. As to expression, highly expressed in the brain, including the cortex, hippocampus, midbrain, olfactory bulb pona plus medulla (at protein level). Expressed in the in the cerebellar granular layer and in granular layer. Colocalized with GPHN at inhibitory synapses. Weakly expressed in heart, testis, lung, intestine, vagina, ovary and uterus.

It localises to the cell projection. Its subcellular location is the dendrite. The protein resides in the postsynaptic cell membrane. Functionally, plays a role in the regulation of inhibitory synapse formation and function by being involved in maintening gamma-aminobutyric acid receptors (GABAARs) clustering and their associated scaffold proteins at inhibitory synaptic sites. Acts in concert with NLGN2 to recruit or stabilize GABAARs. This is LHFPL tetraspan subfamily member 4 protein from Mus musculus (Mouse).